Reading from the N-terminus, the 2528-residue chain is Highly reducing polyketide synthase pspA (2528 aa).

The tract at residues 1–53 is disordered; it reads MLAQDVEFVDLPPPEATAGAATTDNETSSFNSNPVPTPSEASSIGPPHQLPVP. Polar residues predominate over residues 24–42; that stretch reads DNETSSFNSNPVPTPSEAS. Residues 63-483 enclose the Ketosynthase family 3 (KS3) domain; sequence VEPMAICGMA…GSNAHVLLGS (421 aa). Catalysis depends on for beta-ketoacyl synthase activity residues C235, H371, and H406. Residues 590 to 909 are malonyl-CoA:ACP transacylase (MAT) domain; it reads TFTGQGAQWA…HKDLLKAVGE (320 aa). Positions 961 to 1089 are N-terminal hotdog fold; the sequence is HDILGSRVLE…GQVCAGSDRE (129 aa). Residues 961 to 1230 are dehydratase (DH) domain; sequence HDILGSRVLE…VSNGHVTIDI (270 aa). The PKS/mFAS DH domain maps to 961–1244; the sequence is HDILGSRVLE…MSAIGDAADA (284 aa). The active-site Proton acceptor; for dehydratase activity is H993. Positions 1099–1244 are C-terminal hotdog fold; the sequence is PRQLSRRGWY…MSAIGDAADA (146 aa). The active-site Proton donor; for dehydratase activity is the D1160. The segment at 1409 to 1587 is methyltransferase (CMet) domain; it reads VFLELLAHRK…GFSGINLVSH (179 aa). An enoyl reductase (ER) (ER) domain region spans residues 1803–2119; the sequence is GLVDTLCWKS…RGQHIGKIVI (317 aa). Residues 2143 to 2322 form a ketoreductase (KR) domain region; sequence RAYLFVGGLG…ASTVNIGVIQ (180 aa). Residues 2447-2525 form the Carrier domain; the sequence is ETAELLAGEI…DLGVLAQKKL (79 aa). S2485 is modified (O-(pantetheine 4'-phosphoryl)serine).

The catalysed reaction is 9 malonyl-CoA + acetyl-CoA + S-adenosyl-L-methionine + 13 NADPH + 20 H(+) = soppiline A + S-adenosyl-L-homocysteine + 9 CO2 + 13 NADP(+) + 10 CoA + 7 H2O. Its pathway is secondary metabolite biosynthesis. Its function is as follows. Highly reducing polyketide synthase; part of the gene cluster that mediates the biosynthesis of the alkylresorcinols called soppilines. The biosynthesis starts with the HR-PKS pspA-catalyzed carbon chain assembly through nine chain elongation cycles, using acetyl CoA and malonyl CoA as a starter and extender units, respectively, to produce the polyketide soppiline A. In the first round, the KR, DH, and CMeT domains work to produce 2-methyl-2-butenyl thioester. In rounds 2 to 5, the KR, DH, and ER domains fully catalyze the reduction of the elongated beta-ketothioester, resulting in the insertion of eight methylene units. The unusual Z,E,Z-triene motif is likely constructed during rounds 6 to 8. Typically, the DH domain introduces a double bond at an alpha,beta-position of an elongated polyketide chain, with the dehydration of a beta-hydroxy group. The last extension cycle would be carried out with L-oriented beta-ketoreduction by the KR domain to produce beta-hydroxy carboxylic acid soppiline A. The type III PKS pspB intercepts the elongated polyketide chain at round 8 from the HR-PKS pspA, followed by a tri-keto extension and decarboxylative aldol cyclization to produce 1,3,5-trisubstituted alkylresorcinol soppiline B. Subsequently, the cytochrome P450 monooxygenase pspC catalyzes three-step oxidations at the C-4 methyl group to carboxylic acid to yield soppiline C. This chain is Highly reducing polyketide synthase pspA, found in Penicillium soppii.